The primary structure comprises 264 residues: Inner membrane ABC transporter permease protein YdcV (264 aa).

At 1-12 (MHSERAPFFLKL) the chain is on the cytoplasmic side. Residues 13–33 (AAWGGVVFLHFPILIIAAYAF) form a helical membrane-spanning segment. The Periplasmic segment spans residues 34–70 (NTEDAAFSFPPQGLTLRWFSVAAQRSDILDAVTLSLK). The ABC transmembrane type-1 domain maps to 65–252 (VTLSLKVAAL…MLVTTLPILG (188 aa)). A helical transmembrane segment spans residues 71–91 (VAALATLIALVLGTLAAAALW). Topologically, residues 92–100 (RRDFFGKNA) are cytoplasmic. A helical membrane pass occupies residues 101–121 (ISLLLLLPIALPGIVTGLALL). The Periplasmic portion of the chain corresponds to 122 to 128 (TAFKTIN). A helical transmembrane segment spans residues 129 to 149 (LEPGFFTIVVGHATFCVVVVF). Over 150 to 189 (NNVIARFRRTSWSLVEASMDLGANGWQTFRYVVLPNLSSA) the chain is Cytoplasmic. Residues 190-210 (LLAGGMLAFALSFDEIIVTTF) traverse the membrane as a helical segment. Over 211–236 (TAGHERTLPLWLLNQLGRPRDVPVTN) the chain is Periplasmic. The helical transmembrane segment at 237–257 (VVALLVMLVTTLPILGAWWLT) threads the bilayer. Topologically, residues 258–264 (REGDNGQ) are cytoplasmic.

This sequence belongs to the binding-protein-dependent transport system permease family. CysTW subfamily.

It localises to the cell inner membrane. In terms of biological role, probably part of the ABC transporter complex YdcSTUV. Probably responsible for the translocation of the substrate across the membrane. The chain is Inner membrane ABC transporter permease protein YdcV (ydcV) from Shigella flexneri.